The chain runs to 389 residues: Phospho-N-acetylmuramoyl-pentapeptide-transferase (389 aa).

10 helical membrane passes run 21–41 (FITF…LVTG), 70–90 (GTPT…TLLW), 97–117 (FIWV…VDDY), 134–154 (YMWQ…SVSA), 189–209 (TISY…VIVG), 222–242 (GLAI…AYLT), 259–279 (AGEL…FLWF), 286–306 (VFMG…IAVI), 311–331 (VVLF…MLQV), and 366–386 (QVVV…LSTL).

The protein belongs to the glycosyltransferase 4 family. MraY subfamily. Requires Mg(2+) as cofactor.

The protein localises to the cell inner membrane. The enzyme catalyses UDP-N-acetyl-alpha-D-muramoyl-L-alanyl-gamma-D-glutamyl-meso-2,6-diaminopimeloyl-D-alanyl-D-alanine + di-trans,octa-cis-undecaprenyl phosphate = di-trans,octa-cis-undecaprenyl diphospho-N-acetyl-alpha-D-muramoyl-L-alanyl-D-glutamyl-meso-2,6-diaminopimeloyl-D-alanyl-D-alanine + UMP. Its pathway is cell wall biogenesis; peptidoglycan biosynthesis. Its function is as follows. Catalyzes the initial step of the lipid cycle reactions in the biosynthesis of the cell wall peptidoglycan: transfers peptidoglycan precursor phospho-MurNAc-pentapeptide from UDP-MurNAc-pentapeptide onto the lipid carrier undecaprenyl phosphate, yielding undecaprenyl-pyrophosphoryl-MurNAc-pentapeptide, known as lipid I. This chain is Phospho-N-acetylmuramoyl-pentapeptide-transferase, found in Janthinobacterium sp. (strain Marseille) (Minibacterium massiliensis).